The sequence spans 37 residues: Bactericidin B-2 (37 aa).

A Glycine amide modification is found at G37.

It belongs to the cecropin family.

It is found in the secreted. Cecropins have lytic and antibacterial activity against several Gram-positive and Gram-negative bacteria. In Manduca sexta (Tobacco hawkmoth), this protein is Bactericidin B-2.